A 523-amino-acid chain; its full sequence is Non-specific phospholipase C3 (523 aa).

Positions 44 to 64 are disordered; the sequence is DGVSESEPRSNPLSTSDPNSA. Residues 52–64 are compositionally biased toward polar residues; it reads RSNPLSTSDPNSA.

The protein belongs to the bacterial phospholipase C family. Expressed in root tips, cotyledons, on leaf margins, stems, young anthers and funiculus.

The catalysed reaction is a 1-acyl-sn-glycero-3-phosphate + H2O = a 1-acyl-sn-glycerol + phosphate. In terms of biological role, possesses specific phosphatase activity toward lysophosphatidic acid (LPA) in vitro. Does not show phospholipase C activity. May play a role in signal transduction and storage lipid synthesis. May be involved in brassinolide-mediated signaling in root development. The sequence is that of Non-specific phospholipase C3 (NPC3) from Arabidopsis thaliana (Mouse-ear cress).